Here is a 92-residue protein sequence, read N- to C-terminus: Large ribosomal subunit protein bL25 (92 aa).

The protein belongs to the bacterial ribosomal protein bL25 family. As to quaternary structure, part of the 50S ribosomal subunit; part of the 5S rRNA/L5/L18/L25 subcomplex. Contacts the 5S rRNA. Binds to the 5S rRNA independently of L5 and L18.

In terms of biological role, this is one of the proteins that binds to the 5S RNA in the ribosome where it forms part of the central protuberance. The protein is Large ribosomal subunit protein bL25 of Vibrio campbellii (strain ATCC BAA-1116).